Consider the following 341-residue polypeptide: MLFLAPGYIFPNVATPVTVAIDFAQAVKQGAYNVLDLKASPIPNPELFQPPSRIIRGPLNYLLSLPGKDIRGKLIDALNEWFRVPEDKLNIIKEIVVILHTASLLIDDIQDSSELRRGNPVAHRIFGVAQTINSANYAYFLAQAKLADLNDSRAFDIFTKGLLKLHRGQGMELYWRDNLICPTEEEYVEMVSCKTGGLFYLAVQLMQLNSEVTVNFSNFINLLGIIFQIRDDYMNLQSGTMTKTKGFSEDLTEGKFGYPIIHSIHAAPNDSQLIQILKLKTKDEVIKQYAVRYIESTGSFVYCREKLDMYLEEANETFRGLEMLLGPSKGIRAILDFLRTR.

Isopentenyl diphosphate-binding residues include K68, R71, and H100. D107 and D111 together coordinate Mg(2+). A dimethylallyl diphosphate-binding site is contributed by R116. Residue R117 coordinates isopentenyl diphosphate. Dimethylallyl diphosphate-binding residues include K194, T195, and Q228. Residue D231 participates in Mg(2+) binding. Positions 235, 245, and 255 each coordinate dimethylallyl diphosphate.

It belongs to the FPP/GGPP synthase family. Requires Mg(2+) as cofactor.

It catalyses the reaction isopentenyl diphosphate + dimethylallyl diphosphate = (2E)-geranyl diphosphate + diphosphate. It carries out the reaction isopentenyl diphosphate + (2E)-geranyl diphosphate = (2E,6E)-farnesyl diphosphate + diphosphate. The enzyme catalyses isopentenyl diphosphate + (2E,6E)-farnesyl diphosphate = (2E,6E,10E)-geranylgeranyl diphosphate + diphosphate. Its pathway is secondary metabolite biosynthesis. In terms of biological role, geranylgeranyl pyrophosphate synthase; part of the gene cluster that mediates the biosynthesis of the indole diterpenes penitrems. The geranylgeranyl diphosphate (GGPP) synthase penG catalyzes the first step in penitrem biosynthesis via conversion of farnesyl pyrophosphate and isopentyl pyrophosphate into geranylgeranyl pyrophosphate (GGPP). Condensation of indole-3-glycerol phosphate with GGPP by the prenyl transferase penC then forms 3-geranylgeranylindole (3-GGI). Epoxidation by the FAD-dependent monooxygenase penM leads to a epoxidized-GGI that is substrate of the terpene cyclase penB for cyclization to yield paspaline. Paspaline is subsequently converted to 13-desoxypaxilline by the cytochrome P450 monooxygenase penP, the latter being then converted to paxilline by the cytochrome P450 monooxygenase penQ. Paxilline is converted to beta-paxitriol via C-10 ketoreduction by the short-chain dehydrogenase PC-15 which can be monoprenylated at the C-20 by the indole diterpene prenyltransferase penD. A two-step elimination (acetylation and elimination) process performed by the O-acetyltransferase PC-16 and the P.simplicissimum ptmI-ortholog not yet identified in P.crustosum, leads to the production of the prenylated form of penijanthine. The FAD-linked oxidoreductase ptmO then converts the prenylated form of penijanthine into PC-M5 which is in turn transformed into PC-M4 by the aromatic dimethylallyltransferase PC-22. A series of oxidation steps involving 4 cytochrome P450 monooxygenases (PC-21, PC-05, PC-23, PC-20) and a FAD-dependent monooxygenase (PC-14) are required for the transformation of PC-M4 to penitrems A and E. Synthesis of these final products is proposed to proceed via penitrems D and C (PC-21, PC-05, PC-14) and penitrems B and F (PC-21, PC-05, PC-14, PC-23). This chain is Geranylgeranyl pyrophosphate synthase penG, found in Penicillium crustosum (Blue mold fungus).